The primary structure comprises 534 residues: Major facilitator-type transporter sor6 (534 aa).

Asn-29 and Asn-36 each carry an N-linked (GlcNAc...) asparagine glycan. The next 12 membrane-spanning stretches (helical) occupy residues 66-86, 103-123, 160-180, 182-202, 209-229, 241-261, 318-338, 354-374, 395-415, 424-444, 456-476, and 486-506; these read WFLT…SSAY, LFIT…AVWG, AMVA…LIVL, FLAG…IADL, GLAM…GPIV, WVQG…VIFV, IVLI…MFLG, FGGL…GYAI, LPPA…FAWT, VSIV…LPIV, ASVL…FPLF, and IHWA…FPFF.

It belongs to the major facilitator superfamily. Sugar transporter (TC 2.A.1.1) family.

It localises to the membrane. Functionally, major facilitator-type transporter; part of the gene cluster that mediates the biosynthesis of sorbicillinoids, a diverse group of yellow secondary metabolites that restrict growth of competing pathogenic fungi but not of bacteria. The sequence is that of Major facilitator-type transporter sor6 from Hypocrea jecorina (strain QM6a) (Trichoderma reesei).